The following is a 113-amino-acid chain: Large ribosomal subunit protein bL19 (113 aa).

This sequence belongs to the bacterial ribosomal protein bL19 family.

Its function is as follows. This protein is located at the 30S-50S ribosomal subunit interface and may play a role in the structure and function of the aminoacyl-tRNA binding site. The chain is Large ribosomal subunit protein bL19 from Mycobacterium leprae (strain Br4923).